The chain runs to 439 residues: MPDFGANDLDAFWMPFTPNRRFKRHPRMLSSASGMWYRTPESREVLDATSGLWCVNAGHDRPKIREAIQKQAAEMDYAPCFNMGHPLAFQFASRLAQITPKGLDRIFFTNSGSESVDTALKIALAYHRARGKGTKTRLIGRERGYHGVGFGGISVGGIPKNRMYFGSLLTGVDHLPHTHGLPGNTCAKGQPENGAHLADDLERIVALHDASNIAAVIVEPVAGSTGVLIPPKGYLERLRAICDKHDILLIFDEVITGFGRVGAPFAAERFGVTPDLICMAKGLTNAAVPCGAVAASGKIYDAMMDGADAPIELFHGYTYSAHPLACAAGLATLETYREDDLFARAAGLEGYWQDAMHSLADARHVVDVRNLGLVAGIELEPRPGAPTARAMEVFETCFDEGLLIRVTGDIIALSPPLILEKDHIDRMVETIRRVLGQVD.

Pyridoxal 5'-phosphate is bound at residue Gly-112–Ser-113. Lys-281 carries the N6-(pyridoxal phosphate)lysine modification. Thr-318 is a binding site for pyridoxal 5'-phosphate.

This sequence belongs to the class-III pyridoxal-phosphate-dependent aminotransferase family. In terms of assembly, homotetramer. Requires pyridoxal 5'-phosphate as cofactor.

The catalysed reaction is 3-oxopropanoate + L-alanine = beta-alanine + pyruvate. It carries out the reaction 3-aminobutanoate + pyruvate = acetoacetate + L-alanine. The enzyme catalyses benzylamine + pyruvate = benzaldehyde + L-alanine. It catalyses the reaction (S)-1-phenylethylamine + pyruvate = acetophenone + L-alanine. The catalysed reaction is 2-phenylethylamine + pyruvate = 2-phenylacetaldehyde + L-alanine. It carries out the reaction 1-phenylpropylamine + pyruvate = 1-phenylpropan-1-one + L-alanine. The enzyme catalyses 3-phenylpropylamine + pyruvate = 3-phenylpropanal + L-alanine. Functionally, aminotransferase that can use beta-amino acids, aliphatic amines, or aromatic amines as amino donors, and pyruvate as amino acceptor. Shows high activity for short-chain beta-amino acids, with the highest activity for 3-aminobutanoate and beta-alanine in vitro. Displays higher activity toward aromatic amines than aliphatic amines. May be involved in beta-alanine biosynthesis and/or degradation. The polypeptide is Omega-aminotransferase (Caulobacter vibrioides (strain ATCC 19089 / CIP 103742 / CB 15) (Caulobacter crescentus)).